The following is a 298-amino-acid chain: Trimeric intracellular cation channel type A (298 aa).

The Lumenal portion of the chain corresponds to 1–18 (MDLMSALSLGELALSFSR). A helical membrane pass occupies residues 19 to 39 (VPLFPVFDLSYFIVSIIYLKY). The Cytoplasmic portion of the chain corresponds to 40–51 (EPGAVELSRRHP). Residues 52–72 (VASWLCAMLHCFGSYILADLL) traverse the membrane as a helical segment. The Lumenal segment spans residues 73–85 (LGEPIIDYFSNSS). Ca(2+) is bound at residue Gly-74. Residues 86-106 (SILLASGVWYLIFFCPLDLFY) traverse the membrane as a helical segment. At 107–144 (KCVCFLPVKLIFVAMKEVVRVRKIAVGIHHAHHHYHHG) the chain is on the cytoplasmic side. The a 1,2-diacyl-sn-glycero-3-phospho-(1D-myo-inositol-4,5-bisphosphate) site is built by Lys-122 and Arg-126. Residues 145–165 (WFIMIATGWVKGSGVALLSNV) form a helical membrane-spanning segment. The Lumenal portion of the chain corresponds to 166 to 178 (EQLLRGVWKPETN). A helical transmembrane segment spans residues 179–199 (EILHMSFPTKASLYGAILFTL). The Cytoplasmic portion of the chain corresponds to 200–209 (QQTRWLPVSK). Residues 210–230 (ASLIFVFTMFMVSCKVFLTAT) form a helical membrane-spanning segment. The Lumenal segment spans residues 231 to 234 (HSHS). A helical membrane pass occupies residues 235-255 (SPFDILEGYICPVLFGATWGG). The Cytoplasmic portion of the chain corresponds to 256–298 (DHHHDNHGAPHGMGLGTQHSGLPAKAKEELGEGSRKKKTKKAD). Residues 260 to 298 (DNHGAPHGMGLGTQHSGLPAKAKEELGEGSRKKKTKKAD) are disordered. The segment covering 280 to 289 (KAKEELGEGS) has biased composition (basic and acidic residues).

It belongs to the TMEM38 family. Homotrimer; conformation seems to be controled by binding to diacylglycerol (DAG). Expressed at high levels in heart and striated muscle. Also detected in brain, lung and kidney.

Its subcellular location is the sarcoplasmic reticulum membrane. It localises to the nucleus membrane. It catalyses the reaction K(+)(in) = K(+)(out). With respect to regulation, channel activity is activated by a change of voltage within the sarcoplasmic reticulum lumen and blocked by luminal high Ca(2+) levels. Functionally, intracellular monovalent cation channel required for maintenance of rapid intracellular calcium release. Acts as a potassium counter-ion channel that functions in synchronization with calcium release from intracellular stores. Opened by a change of voltage within the sarcoplasmic reticulum lumen. The sequence is that of Trimeric intracellular cation channel type A (Tmem38a) from Mus musculus (Mouse).